Here is a 270-residue protein sequence, read N- to C-terminus: Proteasome subunit alpha type-1 (270 aa).

The disordered stretch occupies residues 239 to 270 (SMEAAEEAPAAEAESSSMQEEDKGTDAAPMDI). Low complexity predominate over residues 245 to 256 (EAPAAEAESSSM).

It belongs to the peptidase T1A family. As to quaternary structure, the 26S proteasome consists of a 20S proteasome core and two 19S regulatory subunits. The 20S proteasome core is composed of 28 subunits that are arranged in four stacked rings, resulting in a barrel-shaped structure. The two end rings are each formed by seven alpha subunits, and the two central rings are each formed by seven beta subunits. The catalytic chamber with the active sites is on the inside of the barrel.

It localises to the cytoplasm. Its subcellular location is the nucleus. The proteasome is a multicatalytic proteinase complex which is characterized by its ability to cleave peptides with Arg, Phe, Tyr, Leu, and Glu adjacent to the leaving group at neutral or slightly basic pH. The proteasome has an ATP-dependent proteolytic activity. The sequence is that of Proteasome subunit alpha type-1 (PAF1) from Oryza sativa subsp. japonica (Rice).